Consider the following 131-residue polypeptide: Calvin cycle protein CP12-2, chloroplastic (131 aa).

The N-terminal 53 residues, 1 to 53 (MATIATGLNIATQRVFVTSENRPVCLAGPVHLNNSWNLGSRTTNRMMKLQPIK), are a transit peptide targeting the chloroplast. Intrachain disulfides connect cysteine 75–cysteine 84 and cysteine 117–cysteine 126. The interval 97–131 (AASHARDKKKADGSDPLEEYCKDNPETNECRTYDN) is disordered. Residues 105-131 (KKADGSDPLEEYCKDNPETNECRTYDN) show a composition bias toward basic and acidic residues.

Belongs to the CP12 family. In terms of assembly, monomer. Component of a complex that contains two dimers of PRK, two tetramers of GAPDH and CP12. CP12 associates with GAPDH, causing its conformation to change. This GAPDH/CP12 complex binds PRK to form a half-complex (one unit). This unit probably dimerizes due partially to interactions between the enzymes of each unit. In terms of processing, contains two disulfide bonds; only the oxidized protein, with two disulfide bonds, is active in complex formation. The C-terminal disulfide is involved in the interaction with GAPDH and the N-terminal disulfide mediates the binding of PRK with this binary complex. As to expression, mostly expressed in cotyledons, leaves and flower stalks, and, to a lower extent, in flowers and stems. Barely detectable in roots and siliques.

The protein resides in the plastid. It localises to the chloroplast. Acts as a linker essential in the assembly of a core complex of PRK/GAPDH. Coordinates the reversible inactivation of chloroplast enzymes GAPDH and PRK during darkness in photosynthetic tissues. The polypeptide is Calvin cycle protein CP12-2, chloroplastic (CP12-2) (Arabidopsis thaliana (Mouse-ear cress)).